A 296-amino-acid chain; its full sequence is Elongation factor Ts (296 aa).

The interval 79-82 (TDFV) is involved in Mg(2+) ion dislocation from EF-Tu.

This sequence belongs to the EF-Ts family.

Its subcellular location is the cytoplasm. Its function is as follows. Associates with the EF-Tu.GDP complex and induces the exchange of GDP to GTP. It remains bound to the aminoacyl-tRNA.EF-Tu.GTP complex up to the GTP hydrolysis stage on the ribosome. This chain is Elongation factor Ts, found in Paracoccus denitrificans (strain Pd 1222).